Reading from the N-terminus, the 355-residue chain is 3'-5' exonuclease (355 aa).

Residues 1 to 119 (MDKFLIKMPI…TPSPEKVKPE (119 aa)) form a disordered region. Basic and acidic residues-rich tracts occupy residues 13–29 (KNNETPEQKPIVKKETP) and 71–91 (KNLDTLEVNTEKNTAESENPP). Residues Ser-104 and Ser-112 each carry the phosphoserine modification. One can recognise a 3'-5' exonuclease domain in the interval 154-315 (TDVDVVPMAF…GQVIYRDLEQ (162 aa)). 3 residues coordinate Mg(2+): Asp-164, Glu-166, and Asp-302.

Belongs to the WRNexo family.

It localises to the nucleus. In terms of biological role, has exonuclease activity on both single-stranded and duplex templates bearing overhangs, but not blunt ended duplex DNA, and cleaves in a 3'-5' direction. Essential for the formation of DNA replication focal centers. Has an important role in maintaining genome stability. The sequence is that of 3'-5' exonuclease from Drosophila persimilis (Fruit fly).